Reading from the N-terminus, the 423-residue chain is MAQFIDRRLNGKNKSAVNRQRFLKRHKEQIKESVADAVNRRSITNTETGEDVSIPHKDINEPIFHQGKGGVRERVHPGNDQFITGDKIERPKGGGQGSGSGEGNASPDGEGQDEFVFQISKDEYLDILFEDLELPNLEKNQIAKITEWKTHRAGFQTAGIPSNISVIRSLQQSLARRTAMTAGKKRLLKELEDELTRIKNIEPAQQLEENRLKKEIEELRKKIENVPFIDTFDLRFKNYEKRPVPSSQAVMFCLMDVSGSMDQATKDIAKRFYVLLYLFLTRTYENVDVVFIRHHTQAKEVDEHEFFYSQETGGTIVSSALKLMDEIVKERYPVGQWNIYAAQASDGDNWADDSPRCRDLLVNKLLPNCQYYSYIEITRRSHQTLWHEYEKLTDEFPNFAMKNIRSVEDIFPVFRELFQKETA.

A disordered region spans residues 69-112; the sequence is GGVRERVHPGNDQFITGDKIERPKGGGQGSGSGEGNASPDGEGQ. A compositionally biased stretch (gly residues) spans 93-102; sequence GGGQGSGSGE.

The protein belongs to the UPF0229 family.

The chain is UPF0229 protein VP0986 from Vibrio parahaemolyticus serotype O3:K6 (strain RIMD 2210633).